The following is a 1888-amino-acid chain: Tensin-1 (1888 aa).

Over residues 21–31 the composition is skewed to pro residues; it reads PQPPGTPPGPA. The tract at residues 21–45 is disordered; that stretch reads PQPPGTPPGPARPERCEPGGAAPDP. The segment at 61–108 adopts a Phorbol-ester/DAG-type zinc-finger fold; that stretch reads THHFKVKAFKKVKPCGICRQAITREGCVCKVCSFSCHRKCQAKVAAPC. The tract at residues 132–174 is disordered; that stretch reads GEGDCRVGSSPKNLEEGGSMRVSPSIQPQPQSQPTSLSRNTSV. Residues 154 to 167 are compositionally biased toward low complexity; sequence SPSIQPQPQSQPTS. One can recognise a Phosphatase tensin-type domain in the interval 175–347; the sequence is SRAMEDSCEL…HYFSGLLSGS (173 aa). A C2 tensin-type domain is found at 352–478; it reads NKPLFLHHVI…GKVEFVFSYG (127 aa). Phosphoserine is present on residues serine 509 and serine 535. Tyrosine 537 bears the Phosphotyrosine mark. Disordered stretches follow at residues 543 to 608, 696 to 722, and 789 to 854; these read KDSL…PQEK, VTNTSESGYPETLSPLTNGLDKPYSTE, and RSQS…SAET. Serine 549 bears the Phosphoserine mark. Over residues 571-584 the composition is skewed to polar residues; that stretch reads LSVSSDSGNSTAST. The residue at position 604 (serine 604) is a Phosphoserine. Serine 792 is modified (phosphoserine). Residues 835–852 are compositionally biased toward polar residues; it reads RSPLQSLARSKPSPQLSA. Residue serine 867 is modified to Phosphoserine. 2 disordered regions span residues 893–1077 and 1109–1555; these read PLHK…RSPV and EEME…AGSL. The span at 905–922 shows a compositional bias: low complexity; that stretch reads PGASPLSSQPLLGSSRQS. Residues serine 930, serine 935, and serine 952 each carry the phosphoserine modification. Residues 962–986 show a composition bias toward polar residues; that stretch reads GSNQSFHPKSPASSTFLPSPHSSAG. Threonine 1015 carries the post-translational modification Phosphothreonine. The residue at position 1054 (serine 1054) is a Phosphoserine. Polar residues predominate over residues 1057 to 1069; that stretch reads QYENQSPEATSPR. Tyrosine 1058 is modified (phosphotyrosine). A phosphoserine mark is found at serine 1062, serine 1118, and serine 1122. Residues 1169-1179 are compositionally biased toward basic and acidic residues; the sequence is EVTKPPEEPRS. The segment covering 1227–1239 has biased composition (low complexity); it reads SPSPLSTSSPILS. Over residues 1240–1257 the composition is skewed to polar residues; sequence ADSTSVGSFPSVVSSDQG. Position 1279 is a phosphoserine (serine 1279). Residues 1284-1300 show a composition bias toward low complexity; that stretch reads SYQSSSPVPVGGSSYNS. Residues 1301-1322 are compositionally biased toward polar residues; sequence PDYSLQPFSSSPESQGQPQYSA. O-linked (GalNAc...) serine glycosylation occurs at serine 1321. The residue at position 1331 (serine 1331) is a Phosphoserine. At threonine 1343 the chain carries Phosphothreonine. At serine 1346 the chain carries Phosphoserine. Phosphothreonine is present on threonine 1420. The residue at position 1423 (serine 1423) is a Phosphoserine. The span at 1436–1446 shows a compositional bias: polar residues; it reads NLASSLHSNAV. Residues serine 1448, serine 1463, and serine 1468 each carry the phosphoserine modification. Residues 1490–1507 show a composition bias toward polar residues; it reads LSRQSSASGYQAPSTPSF. Residues 1518–1530 show a composition bias toward low complexity; sequence SSPATSPSPDSAA. 4 positions are modified to phosphoserine: serine 1535, serine 1547, serine 1554, and serine 1599. In terms of domain architecture, SH2 spans 1616 to 1725; sequence WYKPEISREQ…ALPCKLVIPS (110 aa). Position 1741 is a phosphoserine (serine 1741). The PTB domain maps to 1751–1885; sequence ACNVLFVNSV…FVSKVMLSAG (135 aa).

It belongs to the PTEN phosphatase protein family. In terms of assembly, binds to actin filaments and interacts with phosphotyrosine-containing proteins. Interacts with STARD8. Interacts with protein phosphatase PPP1CA. Interacts (via N-terminus) with Rho GTPase-activating protein DLC1; the interaction is decreased by phosphorylation of TNS1. Interacts with tyrosine-phosphorylated proteins BCAR1/p130Cas and PTK2/FAK; the interactions are increased by phosphorylation of TNS1. Extensively phosphorylated on serine and threonine residues in a p38 MAPK-dependent manner which reduces interaction with DLC1 and increases interaction with tyrosine-phosphorylated proteins including BCAR1/p130cas and PTK2/FAK. The majority of the phosphorylated Ser/Thr residues are immediately adjacent to a proline residue. Also phosphorylated on tyrosine residues. Post-translationally, rapidly cleaved by calpain II.

It is found in the cell surface. It localises to the cell junction. The protein resides in the focal adhesion. Its subcellular location is the cytoplasm. The protein localises to the cytoskeleton. Functionally, may act as a protein phosphatase and/or a lipid phosphatase. Involved in fibrillar adhesion formation. Essential for myofibroblast differentiation and myofibroblast-mediated extracellular matrix deposition. Enhances RHOA activation in the presence of DLC1. Plays a role in cell polarization and migration. May be involved in cartilage development and in linking signal transduction pathways to the cytoskeleton. This is Tensin-1 from Mus musculus (Mouse).